Consider the following 756-residue polypeptide: Alpha-1,2-mannosyltransferase MNN26 (756 aa).

Topologically, residues 1–10 (MSLRRLSPSH) are cytoplasmic. Residues 11-31 (LILGTLVLGVIIFNLYVLTST) form a helical membrane-spanning segment. At 32–756 (HEDIKKVKGP…NGKNKQGAAS (725 aa)) the chain is on the extracellular side. Residues 723–734 (LGEKSQPKQPEI) show a composition bias toward polar residues. The tract at residues 723 to 756 (LGEKSQPKQPEINNNNNNNNNDDDNGKNKQGAAS) is disordered.

The protein belongs to the MNN1/MNT family.

Its subcellular location is the golgi apparatus membrane. Its pathway is protein modification; protein glycosylation. Alpha-1,2-mannosyltransferase required for cell wall integrity. Responsible for addition of the first alpha-1,2-linked mannose to form the branches on the mannan backbone of oligosaccharides. Addition of alpha-1,2-mannose is required for stabilization of the alpha-1,6-mannose backbone and hence regulates mannan fibril length; and is important for both immune recognition and virulence. The protein is Alpha-1,2-mannosyltransferase MNN26 (MNN26) of Candida albicans (strain SC5314 / ATCC MYA-2876) (Yeast).